A 203-amino-acid chain; its full sequence is Glycerol-3-phosphate acyltransferase (203 aa).

4 consecutive transmembrane segments (helical) span residues 4–24, 68–88, 104–124, and 125–145; these read LTFA…AVLI, IPVY…FIGI, GGKG…DMGS, and FMIV…LAAI.

This sequence belongs to the PlsY family. Probably interacts with PlsX.

The protein resides in the cell inner membrane. It carries out the reaction an acyl phosphate + sn-glycerol 3-phosphate = a 1-acyl-sn-glycero-3-phosphate + phosphate. The protein operates within lipid metabolism; phospholipid metabolism. Functionally, catalyzes the transfer of an acyl group from acyl-phosphate (acyl-PO(4)) to glycerol-3-phosphate (G3P) to form lysophosphatidic acid (LPA). This enzyme utilizes acyl-phosphate as fatty acyl donor, but not acyl-CoA or acyl-ACP. The chain is Glycerol-3-phosphate acyltransferase from Tolumonas auensis (strain DSM 9187 / NBRC 110442 / TA 4).